Here is a 216-residue protein sequence, read N- to C-terminus: Probable GTP-binding protein EngB (216 aa).

Residues 27–201 (GGVEIAFAGR…AQTLTGWYLA (175 aa)) enclose the EngB-type G domain. GTP-binding positions include 35 to 42 (GRSNAGKS), 62 to 66 (GRTQL), 80 to 83 (DLPG), 147 to 150 (TKAD), and 180 to 182 (FSS). Mg(2+) is bound by residues serine 42 and threonine 64.

Belongs to the TRAFAC class TrmE-Era-EngA-EngB-Septin-like GTPase superfamily. EngB GTPase family. Mg(2+) serves as cofactor.

In terms of biological role, necessary for normal cell division and for the maintenance of normal septation. This is Probable GTP-binding protein EngB from Aeromonas hydrophila subsp. hydrophila (strain ATCC 7966 / DSM 30187 / BCRC 13018 / CCUG 14551 / JCM 1027 / KCTC 2358 / NCIMB 9240 / NCTC 8049).